The chain runs to 1385 residues: Contactin-associated protein 1 (1385 aa).

The N-terminal stretch at 1–20 (MMSLRLFSILLATVVSGAWG) is a signal peptide. Over 21–1284 (WGYYGCNEEL…PYYHDDGWIA (1264 aa)) the chain is Extracellular. Residues 26–169 (CNEELVGPLY…IGLRLGIYGC (144 aa)) form the F5/8 type C domain. Cysteines 26 and 169 form a disulfide. N-linked (GlcNAc...) asparagine glycans are attached at residues Asn-121, Asn-129, and Asn-277. Laminin G-like domains lie at 204–356 (FKTE…AFRC) and 390–539 (FRTW…FDTC). A disulfide bridge connects residues Cys-324 and Cys-356. N-linked (GlcNAc...) asparagine glycans are attached at residues Asn-421, Asn-500, and Asn-519. Disulfide bonds link Cys-507–Cys-539, Cys-545–Cys-556, Cys-550–Cys-565, and Cys-567–Cys-577. An EGF-like 1 domain is found at 545–577 (CSPNMCEHDGRCYQSWDDFICYCELTGYKGVTC). A Fibrinogen C-terminal domain is found at 577 to 796 (CHEPLYKESC…NTISFHTGAA (220 aa)). Residues Asn-598, Asn-654, Asn-665, Asn-764, Asn-805, Asn-844, Asn-861, Asn-949, and Asn-957 are each glycosylated (N-linked (GlcNAc...) asparagine). The Laminin G-like 3 domain occupies 814-958 (FRTSAPSGVF…NASEGTFPNC (145 aa)). 4 disulfides stabilise this stretch: Cys-931–Cys-958, Cys-962–Cys-975, Cys-969–Cys-984, and Cys-986–Cys-996. One can recognise an EGF-like 2 domain in the interval 962–996 (CTHPRFPCFHGGRCVERYSYYTCDCDLTAFDGPYC). Asn-1079 and Asn-1148 each carry an N-linked (GlcNAc...) asparagine glycan. The Laminin G-like 4 domain occupies 1089-1251 (FSTNSAPAVL…VQGELSESNC (163 aa)). A disulfide bridge connects residues Cys-1210 and Cys-1251. The helical transmembrane segment at 1285–1305 (ILLGFLVAFLLLGLVGMLVLF) threads the bilayer. At 1306–1385 (YLQNHRYKGS…PQILEESRSE (80 aa)) the chain is on the cytoplasmic side. Positions 1317–1385 (HTNEPKATHD…PQILEESRSE (69 aa)) are disordered. Basic and acidic residues predominate over residues 1319–1329 (NEPKATHDSHP). Pro residues predominate over residues 1334-1367 (PLPPSGPAQAPAPTPAPTQLPTPAPAPAPAPASG). Residues 1334 to 1370 (PLPPSGPAQAPAPTPAPTQLPTPAPAPAPAPASGPGP) carry the SH3-binding motif. Ser-1384 is subject to Phosphoserine.

Belongs to the neurexin family. In terms of assembly, interacts with CNTN1/contactin in cis form. In terms of tissue distribution, expressed in brain. In myelinated nerve fibers predominantly found in paranodal axoglial junctions. In the internodal region of myelinated axons in the CNS and the PNS also found as a thin line apposing the inner mesaxon of the myelin sheath. In PNS neurons this line forms a circumferential ring that apposes the innermost aspect of Schmidt-Lanterman incisures.

It localises to the membrane. The protein localises to the cell junction. It is found in the paranodal septate junction. Its function is as follows. Required, with CNTNAP2, for radial and longitudinal organization of myelinated axons. Plays a role in the formation of functional distinct domains critical for saltatory conduction of nerve impulses in myelinated nerve fibers. Demarcates the paranodal region of the axo-glial junction. In association with contactin involved in the signaling between axons and myelinating glial cells. The chain is Contactin-associated protein 1 (Cntnap1) from Mus musculus (Mouse).